A 259-amino-acid polypeptide reads, in one-letter code: Imidazole glycerol phosphate synthase subunit HisF (259 aa).

Residues Asp11 and Asp130 contribute to the active site.

The protein belongs to the HisA/HisF family. In terms of assembly, heterodimer of HisH and HisF.

It localises to the cytoplasm. It carries out the reaction 5-[(5-phospho-1-deoxy-D-ribulos-1-ylimino)methylamino]-1-(5-phospho-beta-D-ribosyl)imidazole-4-carboxamide + L-glutamine = D-erythro-1-(imidazol-4-yl)glycerol 3-phosphate + 5-amino-1-(5-phospho-beta-D-ribosyl)imidazole-4-carboxamide + L-glutamate + H(+). The protein operates within amino-acid biosynthesis; L-histidine biosynthesis; L-histidine from 5-phospho-alpha-D-ribose 1-diphosphate: step 5/9. In terms of biological role, IGPS catalyzes the conversion of PRFAR and glutamine to IGP, AICAR and glutamate. The HisF subunit catalyzes the cyclization activity that produces IGP and AICAR from PRFAR using the ammonia provided by the HisH subunit. In Oleidesulfovibrio alaskensis (strain ATCC BAA-1058 / DSM 17464 / G20) (Desulfovibrio alaskensis), this protein is Imidazole glycerol phosphate synthase subunit HisF.